The following is an 899-amino-acid chain: Calcium-transporting ATPase 1 (899 aa).

4 helical membrane-spanning segments follow: residues 59–79 (FVKD…VTLG), 80–100 (NIDD…VGFV), 247–267 (QLSL…FFQG), and 282–302 (VAAI…LGVL). Asp329 (4-aspartylphosphate intermediate) is an active-site residue. 4 consecutive transmembrane segments (helical) span residues 688–708 (FQLS…VFGF), 757–777 (QLLQ…IVVF), 827–847 (FNIA…ASPF), and 854–874 (EAIG…VLWV). The residue at position 892 (Ser892) is a Phosphoserine.

Belongs to the cation transport ATPase (P-type) (TC 3.A.3) family.

Its subcellular location is the endoplasmic reticulum membrane. It catalyses the reaction Ca(2+)(in) + ATP + H2O = Ca(2+)(out) + ADP + phosphate + H(+). In terms of biological role, transports calcium and manganese ions into the cell. Regulates cell morphogenesis through control of manganese and calcium homeostasis. The polypeptide is Calcium-transporting ATPase 1 (pmr1) (Schizosaccharomyces pombe (strain 972 / ATCC 24843) (Fission yeast)).